We begin with the raw amino-acid sequence, 296 residues long: Bifunctional protein FolD (296 aa).

NADP(+) contacts are provided by residues 166-168 (GRS), S191, and I232.

The protein belongs to the tetrahydrofolate dehydrogenase/cyclohydrolase family. Homodimer.

It catalyses the reaction (6R)-5,10-methylene-5,6,7,8-tetrahydrofolate + NADP(+) = (6R)-5,10-methenyltetrahydrofolate + NADPH. It carries out the reaction (6R)-5,10-methenyltetrahydrofolate + H2O = (6R)-10-formyltetrahydrofolate + H(+). It functions in the pathway one-carbon metabolism; tetrahydrofolate interconversion. Its function is as follows. Catalyzes the oxidation of 5,10-methylenetetrahydrofolate to 5,10-methenyltetrahydrofolate and then the hydrolysis of 5,10-methenyltetrahydrofolate to 10-formyltetrahydrofolate. This chain is Bifunctional protein FolD, found in Cereibacter sphaeroides (strain ATCC 17023 / DSM 158 / JCM 6121 / CCUG 31486 / LMG 2827 / NBRC 12203 / NCIMB 8253 / ATH 2.4.1.) (Rhodobacter sphaeroides).